Here is a 786-residue protein sequence, read N- to C-terminus: ATP-dependent RNA helicase SUPV3L1, mitochondrial (786 aa).

The transit peptide at 1–22 (MSFSRALLWARLPAGRQAGHRA) directs the protein to the mitochondrion. Lys99 is modified (N6-acetyllysine). In terms of domain architecture, Helicase ATP-binding spans 194 to 334 (DARAMQRKII…AIDLVMELMY (141 aa)). An ATP-binding site is contributed by 207 to 214 (GPTNSGKT). N6-acetyllysine is present on Lys220. A Helicase C-terminal domain is found at 353–518 (VLDHALESLD…GLHPTAEQIE (166 aa)). Residues 650–786 (PDASLIRDLQ…RRKKKEPDSD (137 aa)) form an interaction with LAMTOR5, important for protein stability region. Disordered regions lie at residues 690 to 730 (GFPS…DAGE) and 749 to 786 (KQLE…PDSD). The segment covering 693–705 (SGSQSRLSGTLKS) has biased composition (polar residues). The residue at position 725 (Ser725) is a Phosphoserine. A compositionally biased stretch (basic and acidic residues) spans 749–771 (KQLEKEWMTQQTEHNKEKTESGT).

This sequence belongs to the helicase family. In terms of assembly, homodimer; in free form. Component of the mitochondrial degradosome (mtEXO) complex which is a heteropentamer containing 2 copies of SUPV3L1 and 3 copies of PNPT1. As part of mitochondrial degradosome complex, interacts with GRSF1 in a RNA-dependent manner; the interaction enhances the activity of the complex. Interacts with LAMTOR5/HBXIP, WRN and BLM. The cofactor is Mg(2+). Requires Mn(2+) as cofactor. As to expression, broadly expressed.

The protein localises to the nucleus. Its subcellular location is the mitochondrion matrix. The protein resides in the mitochondrion nucleoid. It catalyses the reaction ATP + H2O = ADP + phosphate + H(+). With respect to regulation, helicase activity toward DNA substrate is inhibited by micromolar concentrations of 5,6-dichloro-1-(beta-D-ribofuranosyl)benzotriazole (DRBT) and 4,5,6,7-tetrabromobenzotriazole (TBBT). Helicase activity toward RNA substrate is inhibited by elevated concentrations of TBBT. Inhibited by some ring-expanded nucleoside analogs. Functionally, major helicase player in mitochondrial RNA metabolism. Component of the mitochondrial degradosome (mtEXO) complex, that degrades 3' overhang double-stranded RNA with a 3'-to-5' directionality in an ATP-dependent manner. Involved in the degradation of non-coding mitochondrial transcripts (MT-ncRNA) and tRNA-like molecules. ATPase and ATP-dependent multisubstrate helicase, able to unwind double-stranded (ds) DNA and RNA, and RNA/DNA heteroduplexes in the 5'-to-3' direction. Plays a role in the RNA surveillance system in mitochondria; regulates the stability of mature mRNAs, the removal of aberrantly formed mRNAs and the rapid degradation of non coding processing intermediates. Also implicated in recombination and chromatin maintenance pathways. May protect cells from apoptosis. Associates with mitochondrial DNA. In Homo sapiens (Human), this protein is ATP-dependent RNA helicase SUPV3L1, mitochondrial (SUPV3L1).